The sequence spans 222 residues: MSWLFGDKTPTDDANAAVGGQDTTKPKELSLKQSLGFEPNINNIISGPGGMHVDTARLHPLAGLDKGVEYLDLEEEQLSSLEGSQGLIPSRGWTDDLCYGTGAVYLLGLGIGGFSGMMQGLQNIPPNSPGKLQLNTVLNHITKRGPFLGNNAGILALSYNIINSTIDALRGKHDTAGSIGAGALTGALFKSSKGLKPMGYSSAMVAAACAVWCSVKKRLLEK.

The interval 1–25 (MSWLFGDKTPTDDANAAVGGQDTTK) is disordered. Residues 97–118 (LCYGTGAVYLLGLGIGGFSGMM) traverse the membrane as a helical segment. The Mitochondrial matrix segment spans residues 119 to 144 (QGLQNIPPNSPGKLQLNTVLNHITKR). A helical membrane pass occupies residues 145 to 166 (GPFLGNNAGILALSYNIINSTI). The Mitochondrial intermembrane portion of the chain corresponds to 167–174 (DALRGKHD). A helical transmembrane segment spans residues 175–189 (TAGSIGAGALTGALF). At 190–196 (KSSKGLK) the chain is on the mitochondrial matrix side. The chain crosses the membrane as a helical span at residues 197–215 (PMGYSSAMVAAACAVWCSV). Residues 216 to 222 (KKRLLEK) are Mitochondrial intermembrane-facing.

Belongs to the Tim17/Tim22/Tim23 family. As to quaternary structure, component of the TIM23 complex, at least composed of TIM23, TIM17, TIM50 and TIM21. The complex interacts with the TIM44 component of the PAM complex.

The protein localises to the mitochondrion inner membrane. Its function is as follows. Essential component of the TIM23 complex, a complex that mediates the translocation of transit peptide-containing proteins across the mitochondrial inner membrane. In Saccharomyces cerevisiae (strain ATCC 204508 / S288c) (Baker's yeast), this protein is Mitochondrial import inner membrane translocase subunit TIM23 (TIM23).